The primary structure comprises 1818 residues: Protein encore (1818 aa).

3 disordered regions span residues 47-68, 123-282, and 317-413; these read ANSS…GVSG, SAAG…NSSN, and AERH…GFIS. Over residues 52–66 the composition is skewed to gly residues; it reads VGSGSGPGPGSGAGV. The span at 124–137 shows a compositional bias: polar residues; that stretch reads AAGSSNLGRQNSFG. Positions 141–152 are enriched in basic residues; the sequence is GNMKGKHLTRSH. Low complexity-rich tracts occupy residues 156-179, 186-199, 217-233, and 266-282; these read ESTS…QLQG, NNNN…AQSA, QQPQ…QQSV, and NSNG…NSSN. 2 positions are modified to phosphoserine: S267 and S270. The span at 317 to 328 shows a compositional bias: basic and acidic residues; the sequence is AERHDRHERHEM. Residue S336 is modified to Phosphoserine. Basic and acidic residues predominate over residues 338-348; it reads NHDEEPYHYEP. Composition is skewed to low complexity over residues 372-381 and 391-410; these read NLGGSSSGSI and NCNN…NTSG. An R3H domain is found at 444 to 508; it reads RNILLKIEKD…QCVIVAVAKN (65 aa). The SUZ domain maps to 510–576; the sequence is RIPEIRFQSL…ARSRIFSRTG (67 aa). The residue at position 535 (S535) is a Phosphoserine. Residues 557 to 568 are compositionally biased toward basic and acidic residues; that stretch reads FEEREEDYDRAR. Disordered stretches follow at residues 557 to 806, 885 to 916, 936 to 959, 1176 to 1249, 1332 to 1648, and 1684 to 1709; these read FEER…SYEQ, QEQE…SQTP, PYSQ…EEPK, GQAP…YNPS, AAAG…LVSH, and GAGA…RSHI. Positions 592 to 606 are enriched in low complexity; the sequence is YGGWEQQQQQQKQSQ. The segment covering 644 to 655 has biased composition (gly residues); it reads NYGGPPSSGGPG. Residues 678 to 695 are compositionally biased toward polar residues; it reads QDSTGSTPWRLSPSSSGS. Low complexity predominate over residues 713–771; sequence SGNQYQSQNQGNSSSGGYNNYRKSSPHQQQQSQQQQQSQQHHQQQLQQPQQLHQQSSQQ. Residues 772-784 are compositionally biased toward polar residues; that stretch reads YATTELSCSSTES. A compositionally biased stretch (low complexity) spans 893 to 904; that stretch reads AGPSSSGSATSS. Positions 1176–1197 are enriched in low complexity; sequence GQAPMQQQAPHTGAGTTTGPPT. Polar residues predominate over residues 1220–1231; sequence SSNGSVVTSSAY. The segment covering 1381 to 1392 has biased composition (low complexity); sequence ASQSAPSTPAAP. Residues 1430-1443 are compositionally biased toward polar residues; that stretch reads TPHYYQGQNSNEGY. Low complexity predominate over residues 1503-1521; sequence ASPSSVSLGGASSSGGANS. Composition is skewed to polar residues over residues 1554–1565 and 1579–1596; these read AANSSPGVSSYE and FRSQ…VSQR. Over residues 1608–1633 the composition is skewed to low complexity; that stretch reads SHESSNNSPNSIVGSQSNSAANTPNA. Residues 1684-1705 show a composition bias toward gly residues; it reads GAGASGAAGSNGGHQPGGGGGA.

Interacts with hfp; however, given the nuclear localization of hfp, the relevance of such interaction is unclear. Interacts with CycE, Cul1, and the SCF-proteasome complex. Expressed in all germline cells of the germarium including the stem cells and dividing cystocytes.

The protein resides in the cytoplasm. In terms of biological role, required for the regulation of germline mitosis, karyosome formation, and establishment of dorsoventral (DS) polarity of the egg and embryo. Involved in proper grk mRNA localization and translation in the oocyte. May control germline mitosis by facilitating the cyclin E (CycE) proteolysis by the SCF-ubiquitin-proteasome complex. The chain is Protein encore (enc) from Drosophila melanogaster (Fruit fly).